Reading from the N-terminus, the 255-residue chain is Triosephosphate isomerase (255 aa).

15 to 17 (NWK) provides a ligand contact to substrate. H100 functions as the Electrophile in the catalytic mechanism. E172 functions as the Proton acceptor in the catalytic mechanism. Substrate is bound by residues G178, S218, and 239-240 (GG).

The protein belongs to the triosephosphate isomerase family. As to quaternary structure, homodimer.

The protein localises to the cytoplasm. The catalysed reaction is D-glyceraldehyde 3-phosphate = dihydroxyacetone phosphate. The protein operates within carbohydrate biosynthesis; gluconeogenesis. It participates in carbohydrate degradation; glycolysis; D-glyceraldehyde 3-phosphate from glycerone phosphate: step 1/1. Functionally, involved in the gluconeogenesis. Catalyzes stereospecifically the conversion of dihydroxyacetone phosphate (DHAP) to D-glyceraldehyde-3-phosphate (G3P). The polypeptide is Triosephosphate isomerase (Clostridium tetani (strain Massachusetts / E88)).